We begin with the raw amino-acid sequence, 326 residues long: tRNA uridine(34) hydroxylase (326 aa).

Residues 123-217 (SDPEVLLIDT…YLEEVKPEES (95 aa)) enclose the Rhodanese domain. The active-site Cysteine persulfide intermediate is C177. Residues 293–326 (KSRGESHIGSDVKQVIEARRQDKVERKQRQHQEG) form a disordered region.

Belongs to the TrhO family.

The catalysed reaction is uridine(34) in tRNA + AH2 + O2 = 5-hydroxyuridine(34) in tRNA + A + H2O. In terms of biological role, catalyzes oxygen-dependent 5-hydroxyuridine (ho5U) modification at position 34 in tRNAs. The chain is tRNA uridine(34) hydroxylase from Shewanella loihica (strain ATCC BAA-1088 / PV-4).